The primary structure comprises 475 residues: 3-hydroxyacyl-CoA dehydrogenase-like protein LAM1 (475 aa).

Residue 99–104 (GTRPFA) coordinates NAD(+). Lysine 149 is a CoA binding site. Residue asparagine 245 participates in NAD(+) binding.

Belongs to the 3-hydroxyacyl-CoA dehydrogenase family.

Its pathway is mycotoxin biosynthesis. 3-hydroxyacyl-CoA dehydrogenase-like protein; part of the Tox1A locus, one of the 2 loci that mediate the biosynthesis of T-toxin, a family of linear polyketides 37 to 45 carbons in length, of which the major component is 41 carbons, and which leads to high virulence to maize. One of the PKSs (PKS1 or PKS2) could synthesize a precursor, used subsequently by the other PKS as starter unit, to add additional carbons. Variability in the length of the final carbon backbone C35-47 could be achieved by varying the number of condensation cycles, or use of different starter or extender units or might be due to decarboxylation of the penultimate product, catalyzed by DEC1. Additional proteins are required for the biosynthesis of T-toxin, including oxidoreductases RED1, RED2, RED3, LAM1 and OXI1, as well as esterase TOX9. This is 3-hydroxyacyl-CoA dehydrogenase-like protein LAM1 from Cochliobolus heterostrophus (strain C4 / ATCC 48331 / race T) (Southern corn leaf blight fungus).